Reading from the N-terminus, the 137-residue chain is Proofreading thioesterase EntH (137 aa).

Glu-63 (nucleophile or proton acceptor) is an active-site residue.

Belongs to the thioesterase PaaI family. As to quaternary structure, homotetramer. Dimer of dimers. Interacts specifically with the aryl carrier protein (ArCP) domain of EntB.

The protein resides in the cytoplasm. It functions in the pathway siderophore biosynthesis; enterobactin biosynthesis. Required for optimal enterobactin synthesis. Acts as a proofreading enzyme that prevents EntB misacylation by hydrolyzing the thioester bound existing between EntB and wrongly charged molecules. The protein is Proofreading thioesterase EntH of Citrobacter koseri (strain ATCC BAA-895 / CDC 4225-83 / SGSC4696).